Reading from the N-terminus, the 166-residue chain is Small ribosomal subunit protein uS5 (166 aa).

The S5 DRBM domain maps to 12-75 (YIEKLVQVNR…EAARRNMIQV (64 aa)).

The protein belongs to the universal ribosomal protein uS5 family. Part of the 30S ribosomal subunit. Contacts proteins S4 and S8.

In terms of biological role, with S4 and S12 plays an important role in translational accuracy. Its function is as follows. Located at the back of the 30S subunit body where it stabilizes the conformation of the head with respect to the body. This Pseudomonas fluorescens (strain Pf0-1) protein is Small ribosomal subunit protein uS5.